The chain runs to 352 residues: Biotin synthase (352 aa).

The 219-residue stretch at 44-262 (NRVQVSTLLS…LAVARILMPK (219 aa)) folds into the Radical SAM core domain. [4Fe-4S] cluster is bound by residues Cys-59, Cys-63, and Cys-66. Positions 103, 134, 194, and 266 each coordinate [2Fe-2S] cluster.

Belongs to the radical SAM superfamily. Biotin synthase family. As to quaternary structure, homodimer. [4Fe-4S] cluster is required as a cofactor. [2Fe-2S] cluster serves as cofactor.

The catalysed reaction is (4R,5S)-dethiobiotin + (sulfur carrier)-SH + 2 reduced [2Fe-2S]-[ferredoxin] + 2 S-adenosyl-L-methionine = (sulfur carrier)-H + biotin + 2 5'-deoxyadenosine + 2 L-methionine + 2 oxidized [2Fe-2S]-[ferredoxin]. The protein operates within cofactor biosynthesis; biotin biosynthesis; biotin from 7,8-diaminononanoate: step 2/2. Functionally, catalyzes the conversion of dethiobiotin (DTB) to biotin by the insertion of a sulfur atom into dethiobiotin via a radical-based mechanism. This chain is Biotin synthase, found in Pseudomonas putida (strain GB-1).